The primary structure comprises 66 residues: Large ribosomal subunit protein bL35 (66 aa).

It belongs to the bacterial ribosomal protein bL35 family.

The chain is Large ribosomal subunit protein bL35 from Neorickettsia sennetsu (strain ATCC VR-367 / Miyayama) (Ehrlichia sennetsu).